The following is a 979-amino-acid chain: Pro-apoptotic serine protease NMA111 (979 aa).

Basic and acidic residues predominate over residues M1 to Q20. Residues M1–S43 form a disordered region. Over residues N21–S34 the composition is skewed to low complexity. A serine protease region spans residues K65–L260. Active-site charge relay system residues include H108, D139, and S222. PDZ domains are found at residues E277–Q362 and P871–D943.

This sequence belongs to the peptidase S1C family.

The protein localises to the nucleus. Its function is as follows. Nuclear serine protease which mediates apoptosis. The chain is Pro-apoptotic serine protease NMA111 (NMA111) from Lodderomyces elongisporus (strain ATCC 11503 / CBS 2605 / JCM 1781 / NBRC 1676 / NRRL YB-4239) (Yeast).